The primary structure comprises 130 residues: Small ribosomal subunit protein uS9 (130 aa).

It belongs to the universal ribosomal protein uS9 family.

The polypeptide is Small ribosomal subunit protein uS9 (Stutzerimonas stutzeri (strain A1501) (Pseudomonas stutzeri)).